The sequence spans 641 residues: Phosphomethylpyrimidine synthase (641 aa).

Over residues 1 to 12 the composition is skewed to polar residues; the sequence is MTDTSTQNTATP. A disordered region spans residues 1-25; the sequence is MTDTSTQNTATPTDEYGAEIHPKHS. Residues Asn200, Met229, Tyr258, His294, 314–316, 355–358, and Glu394 contribute to the substrate site; these read SRG and DGLR. Position 398 (His398) interacts with Zn(2+). A substrate-binding site is contributed by Tyr421. His462 provides a ligand contact to Zn(2+). [4Fe-4S] cluster contacts are provided by Cys542, Cys545, and Cys550.

The protein belongs to the ThiC family. [4Fe-4S] cluster serves as cofactor.

It catalyses the reaction 5-amino-1-(5-phospho-beta-D-ribosyl)imidazole + S-adenosyl-L-methionine = 4-amino-2-methyl-5-(phosphooxymethyl)pyrimidine + CO + 5'-deoxyadenosine + formate + L-methionine + 3 H(+). The protein operates within cofactor biosynthesis; thiamine diphosphate biosynthesis. Its function is as follows. Catalyzes the synthesis of the hydroxymethylpyrimidine phosphate (HMP-P) moiety of thiamine from aminoimidazole ribotide (AIR) in a radical S-adenosyl-L-methionine (SAM)-dependent reaction. The sequence is that of Phosphomethylpyrimidine synthase from Corynebacterium jeikeium (strain K411).